A 213-amino-acid polypeptide reads, in one-letter code: Validoxylamine A 7'-phosphate phosphatase (213 aa).

Residue aspartate 8 is the Nucleophile of the active site. Positions 8 and 10 each coordinate a divalent metal cation. Substrate is bound by residues 8–10, 107–108, and lysine 140; these read DLD and TS. The active-site Proton donor is the aspartate 10. Aspartate 165 provides a ligand contact to a divalent metal cation.

This sequence belongs to the HAD-like hydrolase superfamily. CbbY/CbbZ/Gph/YieH family. Mg(2+) serves as cofactor. Mn(2+) is required as a cofactor. It depends on Co(2+) as a cofactor.

The catalysed reaction is validoxylamine A 7'-phosphate + H2O = validoxylamine A + phosphate. In terms of biological role, involved in the biosynthesis of the antifungal agent validamycin A. Catalyzes the dephosphorylation of validoxylamine A 7'-phosphate to yield validoxylamine A. VldH is also able to convert trehalose 6-phosphate to trehalose. The protein is Validoxylamine A 7'-phosphate phosphatase of Streptomyces hygroscopicus subsp. limoneus.